We begin with the raw amino-acid sequence, 179 residues long: Large ribosomal subunit protein uL5 (179 aa).

The protein belongs to the universal ribosomal protein uL5 family. In terms of assembly, part of the 50S ribosomal subunit; part of the 5S rRNA/L5/L18/L25 subcomplex. Contacts the 5S rRNA and the P site tRNA. Forms a bridge to the 30S subunit in the 70S ribosome.

Functionally, this is one of the proteins that bind and probably mediate the attachment of the 5S RNA into the large ribosomal subunit, where it forms part of the central protuberance. In the 70S ribosome it contacts protein S13 of the 30S subunit (bridge B1b), connecting the 2 subunits; this bridge is implicated in subunit movement. Contacts the P site tRNA; the 5S rRNA and some of its associated proteins might help stabilize positioning of ribosome-bound tRNAs. The polypeptide is Large ribosomal subunit protein uL5 (Prochlorococcus marinus (strain AS9601)).